The following is a 413-amino-acid chain: Gamma-glutamyl phosphate reductase (413 aa).

Belongs to the gamma-glutamyl phosphate reductase family.

The protein resides in the cytoplasm. It carries out the reaction L-glutamate 5-semialdehyde + phosphate + NADP(+) = L-glutamyl 5-phosphate + NADPH + H(+). Its pathway is amino-acid biosynthesis; L-proline biosynthesis; L-glutamate 5-semialdehyde from L-glutamate: step 2/2. Functionally, catalyzes the NADPH-dependent reduction of L-glutamate 5-phosphate into L-glutamate 5-semialdehyde and phosphate. The product spontaneously undergoes cyclization to form 1-pyrroline-5-carboxylate. This Thermus thermophilus (strain ATCC 27634 / DSM 579 / HB8) protein is Gamma-glutamyl phosphate reductase.